Consider the following 411-residue polypeptide: Serine hydroxymethyltransferase (411 aa).

Residue 120–122 coordinates (6S)-5,6,7,8-tetrahydrofolate; the sequence is GHL. Lysine 225 carries the post-translational modification N6-(pyridoxal phosphate)lysine. Position 350-352 (350-352) interacts with (6S)-5,6,7,8-tetrahydrofolate; that stretch reads SPF.

The protein belongs to the SHMT family. In terms of assembly, homodimer. It depends on pyridoxal 5'-phosphate as a cofactor.

Its subcellular location is the cytoplasm. It catalyses the reaction (6R)-5,10-methylene-5,6,7,8-tetrahydrofolate + glycine + H2O = (6S)-5,6,7,8-tetrahydrofolate + L-serine. Its pathway is one-carbon metabolism; tetrahydrofolate interconversion. The protein operates within amino-acid biosynthesis; glycine biosynthesis; glycine from L-serine: step 1/1. Functionally, catalyzes the reversible interconversion of serine and glycine with tetrahydrofolate (THF) serving as the one-carbon carrier. This reaction serves as the major source of one-carbon groups required for the biosynthesis of purines, thymidylate, methionine, and other important biomolecules. Also exhibits THF-independent aldolase activity toward beta-hydroxyamino acids, producing glycine and aldehydes, via a retro-aldol mechanism. The chain is Serine hydroxymethyltransferase from Lactobacillus johnsonii (strain CNCM I-12250 / La1 / NCC 533).